An 80-amino-acid chain; its full sequence is Defensin-like protein 51 (80 aa).

The N-terminal stretch at 1-27 (MGFTKILVTFFLVGLLVISSSPQNAIA) is a signal peptide. 4 cysteine pairs are disulfide-bonded: cysteine 39–cysteine 79, cysteine 43–cysteine 66, cysteine 52–cysteine 77, and cysteine 56–cysteine 78.

It belongs to the DEFL family.

The protein localises to the secreted. In Arabidopsis thaliana (Mouse-ear cress), this protein is Defensin-like protein 51 (LCR48).